The following is a 193-amino-acid chain: NADH-quinone oxidoreductase subunit B (193 aa).

Cys-72, Cys-73, Cys-137, and Cys-167 together coordinate [4Fe-4S] cluster.

Belongs to the complex I 20 kDa subunit family. In terms of assembly, NDH-1 is composed of 14 different subunits. Subunits NuoB, C, D, E, F, and G constitute the peripheral sector of the complex. The cofactor is [4Fe-4S] cluster.

The protein resides in the cell inner membrane. The enzyme catalyses a quinone + NADH + 5 H(+)(in) = a quinol + NAD(+) + 4 H(+)(out). In terms of biological role, NDH-1 shuttles electrons from NADH, via FMN and iron-sulfur (Fe-S) centers, to quinones in the respiratory chain. Couples the redox reaction to proton translocation (for every two electrons transferred, four hydrogen ions are translocated across the cytoplasmic membrane), and thus conserves the redox energy in a proton gradient. This Brucella anthropi (strain ATCC 49188 / DSM 6882 / CCUG 24695 / JCM 21032 / LMG 3331 / NBRC 15819 / NCTC 12168 / Alc 37) (Ochrobactrum anthropi) protein is NADH-quinone oxidoreductase subunit B.